We begin with the raw amino-acid sequence, 453 residues long: Ribosomal protein uS12 methylthiotransferase RimO (453 aa).

Residues 3 to 118 enclose the MTTase N-terminal domain; the sequence is KKVGIISLGC…IAKVIEEFYS (116 aa). Residues C12, C48, C81, C162, C166, and C169 each contribute to the [4Fe-4S] cluster site. The Radical SAM core domain maps to 148–378; it reads STNSGYAYLK…MQLQKEIVQR (231 aa). The 69-residue stretch at 381-449 folds into the TRAM domain; the sequence is ESRLEKVYKT…DYDLIGEVIN (69 aa).

Belongs to the methylthiotransferase family. RimO subfamily. Requires [4Fe-4S] cluster as cofactor.

Its subcellular location is the cytoplasm. It catalyses the reaction L-aspartate(89)-[ribosomal protein uS12]-hydrogen + (sulfur carrier)-SH + AH2 + 2 S-adenosyl-L-methionine = 3-methylsulfanyl-L-aspartate(89)-[ribosomal protein uS12]-hydrogen + (sulfur carrier)-H + 5'-deoxyadenosine + L-methionine + A + S-adenosyl-L-homocysteine + 2 H(+). Its function is as follows. Catalyzes the methylthiolation of an aspartic acid residue of ribosomal protein uS12. In Acetivibrio thermocellus (strain ATCC 27405 / DSM 1237 / JCM 9322 / NBRC 103400 / NCIMB 10682 / NRRL B-4536 / VPI 7372) (Clostridium thermocellum), this protein is Ribosomal protein uS12 methylthiotransferase RimO.